Consider the following 510-residue polypeptide: Inositol-3-phosphate synthase (510 aa).

Glycine 70, glycine 71, asparagine 72, asparagine 73, aspartate 143, isoleucine 180, glutamine 190, arginine 193, threonine 230, alanine 231, asparagine 232, threonine 233, glycine 281, serine 282, aspartate 306, serine 309, asparagine 340, asparagine 341, aspartate 342, lysine 355, alanine 393, aspartate 394, aspartate 422, and serine 423 together coordinate NAD(+).

This sequence belongs to the myo-inositol 1-phosphate synthase family. NAD(+) is required as a cofactor.

The protein localises to the cytoplasm. It is found in the cytosol. It localises to the nucleus. The catalysed reaction is D-glucose 6-phosphate = 1D-myo-inositol 3-phosphate. The protein operates within polyol metabolism; myo-inositol biosynthesis; myo-inositol from D-glucose 6-phosphate: step 1/2. Functionally, key enzyme in myo-inositol biosynthesis pathway that catalyzes the conversion of glucose 6-phosphate to 1-myo-inositol 1-phosphate in a NAD-dependent manner. This Brassica napus (Rape) protein is Inositol-3-phosphate synthase.